The sequence spans 263 residues: MRLIIEPDYDKLSTWAADYVIERIHKAAPTAEKPFVLGLPTGSSPIGMYRELVKACKEGCISFRHVITFNMDEYVGLATEHPESYHSFMHRHLFDHIDILPQNIHILNGNAPDLTAECDAYERAIEAAGGIDLFIGGIGPDGHIAFNEPGSSLTSRTRIKTLTTDTVLANSRFFDNDTNQVPKRALTVGVGTIMDAREVMILVNGHTKARALREAVEGAVSQMWTITALQLHRQSIIVCDEAACVELKVGTYNYFKDIERNNL.

The Proton acceptor; for enolization step role is filled by Asp-72. Asp-141 serves as the catalytic For ring-opening step. His-143 functions as the Proton acceptor; for ring-opening step in the catalytic mechanism. Glu-148 functions as the For ring-opening step in the catalytic mechanism.

It belongs to the glucosamine/galactosamine-6-phosphate isomerase family. NagB subfamily.

The enzyme catalyses alpha-D-glucosamine 6-phosphate + H2O = beta-D-fructose 6-phosphate + NH4(+). The protein operates within amino-sugar metabolism; N-acetylneuraminate degradation; D-fructose 6-phosphate from N-acetylneuraminate: step 5/5. With respect to regulation, allosterically activated by N-acetylglucosamine 6-phosphate (GlcNAc6P). Its function is as follows. Catalyzes the reversible isomerization-deamination of glucosamine 6-phosphate (GlcN6P) to form fructose 6-phosphate (Fru6P) and ammonium ion. This is Glucosamine-6-phosphate deaminase from Porphyromonas gingivalis (strain ATCC 33277 / DSM 20709 / CIP 103683 / JCM 12257 / NCTC 11834 / 2561).